We begin with the raw amino-acid sequence, 100 residues long: Urease subunit gamma (100 aa).

Belongs to the urease gamma subunit family. In terms of assembly, heterotrimer of UreA (gamma), UreB (beta) and UreC (alpha) subunits. Three heterotrimers associate to form the active enzyme.

The protein localises to the cytoplasm. The catalysed reaction is urea + 2 H2O + H(+) = hydrogencarbonate + 2 NH4(+). It functions in the pathway nitrogen metabolism; urea degradation; CO(2) and NH(3) from urea (urease route): step 1/1. The sequence is that of Urease subunit gamma from Limosilactobacillus fermentum (Lactobacillus fermentum).